A 170-amino-acid chain; its full sequence is Adenine phosphoribosyltransferase (170 aa).

Belongs to the purine/pyrimidine phosphoribosyltransferase family. Homodimer.

The protein localises to the cytoplasm. The enzyme catalyses AMP + diphosphate = 5-phospho-alpha-D-ribose 1-diphosphate + adenine. The protein operates within purine metabolism; AMP biosynthesis via salvage pathway; AMP from adenine: step 1/1. Functionally, catalyzes a salvage reaction resulting in the formation of AMP, that is energically less costly than de novo synthesis. This is Adenine phosphoribosyltransferase from Alkaliphilus metalliredigens (strain QYMF).